A 292-amino-acid polypeptide reads, in one-letter code: Protein/nucleic acid deglycase HchA (292 aa).

A compositionally biased stretch (polar residues) spans 1-12; the sequence is MSQDVNELSKQP. The disordered stretch occupies residues 1 to 23; the sequence is MSQDVNELSKQPTPDKAEDNAFF. Residue Cys190 is the Nucleophile of the active site.

The protein belongs to the peptidase C56 family. HchA subfamily.

The protein resides in the cytoplasm. The catalysed reaction is N(omega)-(1-hydroxy-2-oxopropyl)-L-arginyl-[protein] + H2O = lactate + L-arginyl-[protein] + H(+). It carries out the reaction N(6)-(1-hydroxy-2-oxopropyl)-L-lysyl-[protein] + H2O = lactate + L-lysyl-[protein] + H(+). The enzyme catalyses S-(1-hydroxy-2-oxopropyl)-L-cysteinyl-[protein] + H2O = lactate + L-cysteinyl-[protein] + H(+). It catalyses the reaction N(omega)-(1-hydroxy-2-oxoethyl)-L-arginyl-[protein] + H2O = L-arginyl-[protein] + glycolate + H(+). The catalysed reaction is N(6)-(1-hydroxy-2-oxoethyl)-L-lysyl-[protein] + H2O = glycolate + L-lysyl-[protein] + H(+). It carries out the reaction S-(1-hydroxy-2-oxoethyl)-L-cysteinyl-[protein] + H2O = glycolate + L-cysteinyl-[protein] + H(+). The enzyme catalyses N(2)-(1-hydroxy-2-oxopropyl)-dGTP + H2O = lactate + dGTP + H(+). It catalyses the reaction N(2)-(1-hydroxy-2-oxopropyl)-GTP + H2O = lactate + GTP + H(+). The catalysed reaction is N(2)-(1-hydroxy-2-oxopropyl)-GDP + H2O = lactate + GDP + H(+). It carries out the reaction N(2)-(1-hydroxy-2-oxopropyl)-GMP + H2O = lactate + GMP + H(+). The enzyme catalyses N(2)-(1-hydroxy-2-oxoethyl)-dGTP + H2O = dGTP + glycolate + H(+). It catalyses the reaction N(2)-(1-hydroxy-2-oxoethyl)-GTP + H2O = glycolate + GTP + H(+). The catalysed reaction is N(2)-(1-hydroxy-2-oxoethyl)-GDP + H2O = glycolate + GDP + H(+). It carries out the reaction N(2)-(1-hydroxy-2-oxoethyl)-GMP + H2O = glycolate + GMP + H(+). The enzyme catalyses an N(2)-(1-hydroxy-2-oxopropyl)-guanosine in RNA + H2O = a guanosine in RNA + lactate + H(+). It catalyses the reaction an N(2)-(1-hydroxy-2-oxopropyl)-2'-deoxyguanosine in DNA + H2O = a 2'-deoxyguanosine in DNA + lactate + H(+). The catalysed reaction is an N(2)-(1-hydroxy-2-oxoethyl)-guanosine in RNA + H2O = a guanosine in RNA + glycolate + H(+). It carries out the reaction an N(2)-(1-hydroxy-2-oxoethyl)-2'-deoxyguanosine in DNA + H2O = a 2'-deoxyguanosine in DNA + glycolate + H(+). Functionally, protein and nucleotide deglycase that catalyzes the deglycation of the Maillard adducts formed between amino groups of proteins or nucleotides and reactive carbonyl groups of glyoxals. Thus, functions as a protein deglycase that repairs methylglyoxal- and glyoxal-glycated proteins, and releases repaired proteins and lactate or glycolate, respectively. Deglycates cysteine, arginine and lysine residues in proteins, and thus reactivates these proteins by reversing glycation by glyoxals. Acts on early glycation intermediates (hemithioacetals and aminocarbinols), preventing the formation of Schiff bases and advanced glycation endproducts (AGE). Also functions as a nucleotide deglycase able to repair glycated guanine in the free nucleotide pool (GTP, GDP, GMP, dGTP) and in DNA and RNA. Is thus involved in a major nucleotide repair system named guanine glycation repair (GG repair), dedicated to reversing methylglyoxal and glyoxal damage via nucleotide sanitization and direct nucleic acid repair. Plays an important role in protecting cells from carbonyl stress. This Staphylococcus aureus (strain Newman) protein is Protein/nucleic acid deglycase HchA.